Here is a 124-residue protein sequence, read N- to C-terminus: Ribosome-binding factor A (124 aa).

This sequence belongs to the RbfA family. In terms of assembly, monomer. Binds 30S ribosomal subunits, but not 50S ribosomal subunits or 70S ribosomes.

The protein resides in the cytoplasm. In terms of biological role, one of several proteins that assist in the late maturation steps of the functional core of the 30S ribosomal subunit. Associates with free 30S ribosomal subunits (but not with 30S subunits that are part of 70S ribosomes or polysomes). Required for efficient processing of 16S rRNA. May interact with the 5'-terminal helix region of 16S rRNA. This Buchnera aphidicola subsp. Schizaphis graminum (strain Sg) protein is Ribosome-binding factor A.